Consider the following 361-residue polypeptide: Phospho-N-acetylmuramoyl-pentapeptide-transferase (361 aa).

The next 10 helical transmembrane spans lie at 26 to 46, 71 to 91, 97 to 117, 134 to 154, 168 to 188, 200 to 220, 236 to 256, 264 to 284, 290 to 310, and 338 to 358; these read AGGA…CIIE, TPTM…FLWA, FILW…CDDY, IFGQ…FPSN, GFFI…IVGS, GLAI…AYFA, GAGE…GFLW, IFMG…VSLF, VLVL…IQIF, and KVTV…FASL.

It belongs to the glycosyltransferase 4 family. MraY subfamily. Requires Mg(2+) as cofactor.

It is found in the cell membrane. The catalysed reaction is UDP-N-acetyl-alpha-D-muramoyl-L-alanyl-gamma-D-glutamyl-meso-2,6-diaminopimeloyl-D-alanyl-D-alanine + di-trans,octa-cis-undecaprenyl phosphate = di-trans,octa-cis-undecaprenyl diphospho-N-acetyl-alpha-D-muramoyl-L-alanyl-D-glutamyl-meso-2,6-diaminopimeloyl-D-alanyl-D-alanine + UMP. It participates in cell wall biogenesis; peptidoglycan biosynthesis. Functionally, catalyzes the initial step of the lipid cycle reactions in the biosynthesis of the cell wall peptidoglycan: transfers peptidoglycan precursor phospho-MurNAc-pentapeptide from UDP-MurNAc-pentapeptide onto the lipid carrier undecaprenyl phosphate, yielding undecaprenyl-pyrophosphoryl-MurNAc-pentapeptide, known as lipid I. The polypeptide is Phospho-N-acetylmuramoyl-pentapeptide-transferase (Endomicrobium trichonymphae).